The sequence spans 332 residues: Small ribosomal subunit biogenesis GTPase RsgA (332 aa).

Residues 103 to 259 form the CP-type G domain; that stretch reads RQQLIAANLD…LIDTPGMREL (157 aa). GTP is bound by residues 148–151 and 201–209; these read TKVD and GSSGAGKST. Zn(2+) contacts are provided by Cys-281, Cys-286, His-288, and Cys-294.

The protein belongs to the TRAFAC class YlqF/YawG GTPase family. RsgA subfamily. As to quaternary structure, monomer. Associates with 30S ribosomal subunit, binds 16S rRNA. The cofactor is Zn(2+).

The protein localises to the cytoplasm. Its function is as follows. One of several proteins that assist in the late maturation steps of the functional core of the 30S ribosomal subunit. Helps release RbfA from mature subunits. May play a role in the assembly of ribosomal proteins into the subunit. Circularly permuted GTPase that catalyzes slow GTP hydrolysis, GTPase activity is stimulated by the 30S ribosomal subunit. This is Small ribosomal subunit biogenesis GTPase RsgA from Xylella fastidiosa (strain M23).